A 616-amino-acid chain; its full sequence is Dihydroxy-acid dehydratase (616 aa).

Asp-81 lines the Mg(2+) pocket. Position 122 (Cys-122) interacts with [2Fe-2S] cluster. 2 residues coordinate Mg(2+): Asp-123 and Lys-124. An N6-carboxylysine modification is found at Lys-124. Residue Cys-195 participates in [2Fe-2S] cluster binding. Glu-491 is a Mg(2+) binding site. The active-site Proton acceptor is Ser-517.

It belongs to the IlvD/Edd family. As to quaternary structure, homodimer. [2Fe-2S] cluster serves as cofactor. It depends on Mg(2+) as a cofactor.

The enzyme catalyses (2R)-2,3-dihydroxy-3-methylbutanoate = 3-methyl-2-oxobutanoate + H2O. It catalyses the reaction (2R,3R)-2,3-dihydroxy-3-methylpentanoate = (S)-3-methyl-2-oxopentanoate + H2O. It participates in amino-acid biosynthesis; L-isoleucine biosynthesis; L-isoleucine from 2-oxobutanoate: step 3/4. The protein operates within amino-acid biosynthesis; L-valine biosynthesis; L-valine from pyruvate: step 3/4. Its function is as follows. Functions in the biosynthesis of branched-chain amino acids. Catalyzes the dehydration of (2R,3R)-2,3-dihydroxy-3-methylpentanoate (2,3-dihydroxy-3-methylvalerate) into 2-oxo-3-methylpentanoate (2-oxo-3-methylvalerate) and of (2R)-2,3-dihydroxy-3-methylbutanoate (2,3-dihydroxyisovalerate) into 2-oxo-3-methylbutanoate (2-oxoisovalerate), the penultimate precursor to L-isoleucine and L-valine, respectively. This Edwardsiella ictaluri (strain 93-146) protein is Dihydroxy-acid dehydratase.